The chain runs to 204 residues: UPF0056 membrane protein TC_0241 (204 aa).

6 helical membrane-spanning segments follow: residues 8-28 (LTLL…FVAL), 46-66 (IFAL…FRLL), 68-88 (VSLP…AINM), 107-127 (IFYP…STLG), 138-158 (LVLG…FFSS), and 176-196 (FGIS…STAF).

The protein belongs to the UPF0056 (MarC) family.

Its subcellular location is the cell membrane. This Chlamydia muridarum (strain MoPn / Nigg) protein is UPF0056 membrane protein TC_0241.